The sequence spans 33 residues: MSDIN-like toxin proprotein 5 (33 aa).

Positions 1-10 (MSDINATRLP) are excised as a propeptide. The cyclopeptide (Ile-Pro) cross-link spans 11–18 (IFWFIYFP). The propeptide occupies 19-32 (CVGDNVDNTLTRGE).

The protein belongs to the MSDIN fungal toxin family. Processed by the macrocyclase-peptidase enzyme POPB to yield a toxic cyclic octapeptide. POPB first removes 10 residues from the N-terminus. Conformational trapping of the remaining peptide forces the enzyme to release this intermediate rather than proceed to macrocyclization. The enzyme rebinds the remaining peptide in a different conformation and catalyzes macrocyclization of the N-terminal 8 residues.

Functionally, probable toxin that belongs to the MSDIN-like toxin family responsible for a large number of food poisoning cases and deaths. The protein is MSDIN-like toxin proprotein 5 of Amanita phalloides (Death cap).